The chain runs to 45 residues: Photosystem II reaction center protein K (45 aa).

The propeptide occupies 1 to 8; that stretch reads MEAVLLLA. Residues 24-44 form a helical membrane-spanning segment; the sequence is MPVIPLFFLALAFVWQAAVGF.

The protein belongs to the PsbK family. As to quaternary structure, PSII is composed of 1 copy each of membrane proteins PsbA, PsbB, PsbC, PsbD, PsbE, PsbF, PsbH, PsbI, PsbJ, PsbK, PsbL, PsbM, PsbT, PsbX, PsbY, PsbZ, Psb30/Ycf12, peripheral proteins PsbO, CyanoQ (PsbQ), PsbU, PsbV and a large number of cofactors. It forms dimeric complexes.

Its subcellular location is the cellular thylakoid membrane. In terms of biological role, one of the components of the core complex of photosystem II (PSII). PSII is a light-driven water:plastoquinone oxidoreductase that uses light energy to abstract electrons from H(2)O, generating O(2) and a proton gradient subsequently used for ATP formation. It consists of a core antenna complex that captures photons, and an electron transfer chain that converts photonic excitation into a charge separation. The sequence is that of Photosystem II reaction center protein K from Acaryochloris marina (strain MBIC 11017).